Here is a 402-residue protein sequence, read N- to C-terminus: MRRRLRLRRDALLTLLLGASLGLLLYAQRDGAAPTASAPRGRGRAAPRPTPGPRAFQLPDAGAAPPAYEGDTPAPPTPTGPFDFARYLRAKDQRRFPLLINQPHKCRGDGAPGGRPDLLIAVKSVAEDFERRQAVRQTWGAEGRVQGALVRRVFLLGVPRGAGSGGADEVGEGARTHWRALLRAESLAYADILLWAFDDTFFNLTLKEIHFLAWASAFCPDVRFVFKGDADVFVNVGNLLEFLAPRDPAQDLLAGDVIVHARPIRTRASKYYIPEAVYGLPAYPAYAGGGGFVLSGATLHRLAGACAQVELFPIDDVFLGMCLQRLRLTPEPHPAFRTFGIPQPSAAPHLSTFDPCFYRELVVVHGLSAADIWLMWRLLHGPHGPACAHPQPVAAGPFQWDS.

Residues 1–10 (MRRRLRLRRD) are Cytoplasmic-facing. A helical; Signal-anchor for type II membrane protein membrane pass occupies residues 11 to 27 (ALLTLLLGASLGLLLYA). Residues 28–402 (QRDGAAPTAS…VAAGPFQWDS (375 aa)) are Lumenal-facing. A compositionally biased stretch (low complexity) spans 32-47 (AAPTASAPRGRGRAAP). The interval 32–83 (AAPTASAPRGRGRAAPRPTPGPRAFQLPDAGAAPPAYEGDTPAPPTPTGPFD) is disordered.

This sequence belongs to the glycosyltransferase 31 family.

The protein resides in the golgi apparatus membrane. This chain is UDP-GlcNAc:betaGal beta-1,3-N-acetylglucosaminyltransferase 9, found in Homo sapiens (Human).